Consider the following 469-residue polypeptide: Uronate isomerase (469 aa).

The protein belongs to the metallo-dependent hydrolases superfamily. Uronate isomerase family.

The enzyme catalyses D-glucuronate = D-fructuronate. It catalyses the reaction aldehydo-D-galacturonate = keto-D-tagaturonate. Its pathway is carbohydrate metabolism; pentose and glucuronate interconversion. This chain is Uronate isomerase, found in Yersinia enterocolitica serotype O:8 / biotype 1B (strain NCTC 13174 / 8081).